The sequence spans 247 residues: UPF0273 protein PH0284 (247 aa).

In terms of domain architecture, KaiC spans 3–247 (RRVKTGIPGV…VLKRGKVLEL (245 aa)). ATP is bound at residue 30-37 (GGPGTGKT).

It belongs to the UPF0273 family.

The polypeptide is UPF0273 protein PH0284 (Pyrococcus horikoshii (strain ATCC 700860 / DSM 12428 / JCM 9974 / NBRC 100139 / OT-3)).